Here is a 260-residue protein sequence, read N- to C-terminus: Coiled-coil domain-containing protein 172 (260 aa).

The stretch at 13 to 194 forms a coiled coil; that stretch reads SEHQAEESRR…FEDKKHEAIC (182 aa).

This sequence belongs to the CCDC172 family. In terms of assembly, may interact with TEKT2.

It is found in the cytoplasm. The protein localises to the cell projection. The protein resides in the cilium. The chain is Coiled-coil domain-containing protein 172 (CCDC172) from Bos taurus (Bovine).